Consider the following 293-residue polypeptide: 16S rRNA (guanine(1405)-N(7))-methyltransferase (293 aa).

S-adenosyl-L-methionine is bound by residues phenylalanine 47, 80 to 82 (HAS), arginine 86, alanine 111, aspartate 134, 160 to 161 (DL), leucine 176, and glutamine 185. The span at 258–274 (GRPAPAEGAAEPGATRP) shows a compositional bias: low complexity. The disordered stretch occupies residues 258–293 (GRPAPAEGAAEPGATRPVVDVPATARPDADRVDPTG). The segment covering 284–293 (PDADRVDPTG) has biased composition (basic and acidic residues).

This sequence belongs to the methyltransferase superfamily. Aminoglycoside resistance family.

The enzyme catalyses guanosine(1405) in 16S rRNA + S-adenosyl-L-methionine = N(7)-methylguanosine(1405) in 16S rRNA + S-adenosyl-L-homocysteine. Functionally, specifically methylates the N(7) position of guanine 1405 in 16S rRNA. Confers resistance to aminoglycosides. The chain is 16S rRNA (guanine(1405)-N(7))-methyltransferase (fmrO) from Micromonospora olivasterospora.